Consider the following 492-residue polypeptide: MTDLTSLTLAEARDGLVNKSFTAVELTDAHLAAIEAARVLNAYVLETPDQARQMAQAADAQIAKGEGGPLAGIPLGIKDLFATKGTRTTACSKILGDFKPPYESTVTSQLWRDGAVLLGKLNNDEFAMGSSNETSCFGPVVNPWRRAGSETKLVPGGSSGGSAAAVAAGLCLGATATDTGGSIRQPAAFTGTVGIKPTYGRCSRWGIVAFASSLDQAGPIARTVRDSAILLGSMAGFDPKDTTSVDRPVPNYEAAIGGSVKGMKIGIPKEYRLDGMPAEIEKLWMQGAEWLKAAGAELVEVSLPHTKYALPAYYIVAPAEASSNLARYDGVRYGTRVNGRNIVEMYENTRAAGFGAEVKRRIMIGTYVLSAGYYDAYYLRAQKVRTLIKRDFEQCFDQGVSAILTPATPSAAFGIGEKGGADPVEMYLNDIFTVTVNMAGLPGIAVPAGSDSQGLPLGLQLIGRPFDEETLFSLGDVIEQSAGRFTPAKWWA.

Residues Lys-78 and Ser-158 each act as charge relay system in the active site. Ser-182 serves as the catalytic Acyl-ester intermediate.

The protein belongs to the amidase family. GatA subfamily. Heterotrimer of A, B and C subunits.

It carries out the reaction L-glutamyl-tRNA(Gln) + L-glutamine + ATP + H2O = L-glutaminyl-tRNA(Gln) + L-glutamate + ADP + phosphate + H(+). In terms of biological role, allows the formation of correctly charged Gln-tRNA(Gln) through the transamidation of misacylated Glu-tRNA(Gln) in organisms which lack glutaminyl-tRNA synthetase. The reaction takes place in the presence of glutamine and ATP through an activated gamma-phospho-Glu-tRNA(Gln). In Rhodopseudomonas palustris (strain HaA2), this protein is Glutamyl-tRNA(Gln) amidotransferase subunit A.